We begin with the raw amino-acid sequence, 142 residues long: Large ribosomal subunit protein uL11 (142 aa).

The protein belongs to the universal ribosomal protein uL11 family. In terms of assembly, part of the ribosomal stalk of the 50S ribosomal subunit. Interacts with L10 and the large rRNA to form the base of the stalk. L10 forms an elongated spine to which L12 dimers bind in a sequential fashion forming a multimeric L10(L12)X complex. In terms of processing, one or more lysine residues are methylated.

Forms part of the ribosomal stalk which helps the ribosome interact with GTP-bound translation factors. The polypeptide is Large ribosomal subunit protein uL11 (Xanthomonas oryzae pv. oryzae (strain MAFF 311018)).